Here is a 319-residue protein sequence, read N- to C-terminus: Ribosomal RNA small subunit methyltransferase H (319 aa).

Residues 39–41 (GGH), Asp59, Phe83, Asp104, and Gln111 each bind S-adenosyl-L-methionine.

It belongs to the methyltransferase superfamily. RsmH family.

Its subcellular location is the cytoplasm. It carries out the reaction cytidine(1402) in 16S rRNA + S-adenosyl-L-methionine = N(4)-methylcytidine(1402) in 16S rRNA + S-adenosyl-L-homocysteine + H(+). Specifically methylates the N4 position of cytidine in position 1402 (C1402) of 16S rRNA. The sequence is that of Ribosomal RNA small subunit methyltransferase H from Ralstonia pickettii (strain 12J).